We begin with the raw amino-acid sequence, 186 residues long: Large ribosomal subunit protein uL10 (186 aa).

This sequence belongs to the universal ribosomal protein uL10 family. In terms of assembly, part of the ribosomal stalk of the 50S ribosomal subunit. The N-terminus interacts with L11 and the large rRNA to form the base of the stalk. The C-terminus forms an elongated spine to which L12 dimers bind in a sequential fashion forming a multimeric L10(L12)X complex.

Its function is as follows. Forms part of the ribosomal stalk, playing a central role in the interaction of the ribosome with GTP-bound translation factors. The chain is Large ribosomal subunit protein uL10 from Roseiflexus sp. (strain RS-1).